A 397-amino-acid chain; its full sequence is Elongation factor Tu (397 aa).

Residues 10–206 (KPHCNIGTIG…AVDEYIPQPE (197 aa)) form the tr-type G domain. The tract at residues 19–26 (GHIDHGKT) is G1. A GTP-binding site is contributed by 19–26 (GHIDHGKT). Thr-26 contacts Mg(2+). The tract at residues 62–66 (GITIS) is G2. The tract at residues 83–86 (DCPG) is G3. Residues 83–87 (DCPGH) and 138–141 (NKCD) contribute to the GTP site. Positions 138–141 (NKCD) are G4. The tract at residues 176–178 (SAF) is G5.

The protein belongs to the TRAFAC class translation factor GTPase superfamily. Classic translation factor GTPase family. EF-Tu/EF-1A subfamily. As to quaternary structure, monomer.

The protein localises to the cytoplasm. The catalysed reaction is GTP + H2O = GDP + phosphate + H(+). GTP hydrolase that promotes the GTP-dependent binding of aminoacyl-tRNA to the A-site of ribosomes during protein biosynthesis. This Cutibacterium acnes (strain DSM 16379 / KPA171202) (Propionibacterium acnes) protein is Elongation factor Tu.